The chain runs to 564 residues: Acetylcholine receptor subunit alpha-type deg-3 (564 aa).

A signal peptide spans 1–20 (MTLKIRTIIILFCVISVTTT). Over 21-268 (SQSLNATLKT…SLVIQRKPLY (248 aa)) the chain is Extracellular. N-linked (GlcNAc...) asparagine glycans are attached at residues asparagine 25, asparagine 37, asparagine 125, and asparagine 198. Intrachain disulfides connect cysteine 185–cysteine 199 and cysteine 248–cysteine 249. Transmembrane regions (helical) follow at residues 269 to 289 (YLVN…TGFF), 302 to 319 (INLG…MLMV), and 329 to 353 (FVPL…LTSV). The Cytoplasmic portion of the chain corresponds to 354–526 (VLSVQGRRQY…WEFLATVLDR (173 aa)). The helical transmembrane segment at 527–547 (FLLIVFVGAVVIVTAGLILVG) threads the bilayer.

This sequence belongs to the ligand-gated ion channel (TC 1.A.9) family. Acetylcholine receptor (TC 1.A.9.1) subfamily. The functional receptor is a heteromer of deg-3 and des-2. Interacts with ric-3; which is required for proper receptor folding.

The protein resides in the postsynaptic cell membrane. The protein localises to the cell membrane. Functionally, subunit of the non-synaptic neuronal acetylcholine receptor, which may play a role in chemotaxis towards choline. After binding choline or acetylcholine, the AChR responds by an extensive change in conformation that affects all subunits and leads to opening of an ion-conducting channel across the plasma membrane. This Caenorhabditis elegans protein is Acetylcholine receptor subunit alpha-type deg-3 (deg-3).